Here is a 148-residue protein sequence, read N- to C-terminus: Lysozyme C (148 aa).

The signal sequence occupies residues 1-18; it reads MKALIILGLVLLSVTVQG. Residues 19-148 form the C-type lysozyme domain; sequence KIFERCELAR…VSQYVKGCGV (130 aa). 4 disulfides stabilise this stretch: Cys-24–Cys-146, Cys-48–Cys-134, Cys-83–Cys-99, and Cys-95–Cys-113. Active-site residues include Glu-53 and Asp-71.

The protein belongs to the glycosyl hydrolase 22 family. In terms of assembly, monomer.

Its subcellular location is the secreted. The enzyme catalyses Hydrolysis of (1-&gt;4)-beta-linkages between N-acetylmuramic acid and N-acetyl-D-glucosamine residues in a peptidoglycan and between N-acetyl-D-glucosamine residues in chitodextrins.. In terms of biological role, lysozymes have primarily a bacteriolytic function; those in tissues and body fluids are associated with the monocyte-macrophage system and enhance the activity of immunoagents. The chain is Lysozyme C (LYZ) from Nasalis larvatus (Proboscis monkey).